The following is a 169-amino-acid chain: Lipoprotein signal peptidase (169 aa).

The next 3 helical transmembrane spans lie at 12 to 32, 70 to 90, and 102 to 122; these read WLWL…WILG, WFFA…MYRS, and AFII…GFVV. Catalysis depends on residues aspartate 123 and aspartate 141. The chain crosses the membrane as a helical span at residues 137–157; sequence FNLADSFICVGAAMIVLEGFL.

The protein belongs to the peptidase A8 family.

Its subcellular location is the cell inner membrane. It carries out the reaction Release of signal peptides from bacterial membrane prolipoproteins. Hydrolyzes -Xaa-Yaa-Zaa-|-(S,diacylglyceryl)Cys-, in which Xaa is hydrophobic (preferably Leu), and Yaa (Ala or Ser) and Zaa (Gly or Ala) have small, neutral side chains.. Its pathway is protein modification; lipoprotein biosynthesis (signal peptide cleavage). In terms of biological role, this protein specifically catalyzes the removal of signal peptides from prolipoproteins. This is Lipoprotein signal peptidase from Serratia proteamaculans (strain 568).